Reading from the N-terminus, the 118-residue chain is UPF0251 protein Teth39_0655 (118 aa).

It belongs to the UPF0251 family.

This is UPF0251 protein Teth39_0655 from Thermoanaerobacter pseudethanolicus (strain ATCC 33223 / 39E) (Clostridium thermohydrosulfuricum).